The primary structure comprises 533 residues: Probable polyamine oxidase 5 (533 aa).

4 residues coordinate FAD: Glu37, Arg45, Val262, and Glu501.

It belongs to the flavin monoamine oxidase family. It depends on FAD as a cofactor. As to expression, expressed in root vasculature, leaves and stems.

It is found in the cytoplasm. It catalyses the reaction spermine + O2 + H2O = 3-aminopropanal + spermidine + H2O2. The enzyme catalyses N(1)-acetylspermine + O2 + H2O = 3-acetamidopropanal + spermidine + H2O2. The catalysed reaction is norspermine + O2 + H2O = norspermidine + 3-aminopropanal + H2O2. It carries out the reaction thermospermine + O2 + H2O = 3-aminopropanal + spermidine + H2O2. It functions in the pathway amine and polyamine degradation; spermine degradation. In terms of biological role, flavoenzyme involved in polyamine back-conversion. Catalyzes the oxidation of the secondary amino group of polyamines, such as spermine and its acetyl derivatives. Substrate preference is spermine &gt; N(1)-acetylspermine &gt; thermospermine &gt; norspermine. Plays an important role in the regulation of polyamine intracellular concentration. Involved in xylem differentiation by controlling thermospermine homeostasis, and participating in the tightly controlled interplay between auxin and cytokinin that is necessary for proper xylem differentiation. Involved in the production of hydrogen peroxide in response to salt and cold stresses. In Arabidopsis thaliana (Mouse-ear cress), this protein is Probable polyamine oxidase 5.